The primary structure comprises 222 residues: NADH dehydrogenase [ubiquinone] iron-sulfur protein 8-A, mitochondrial (222 aa).

2 consecutive 4Fe-4S ferredoxin-type domains span residues 114-143 (RRYP…IEAE) and 153-182 (TRYD…EGPN). The [4Fe-4S] cluster site is built by C123, C126, C129, C133, C162, C165, C168, and C172.

This sequence belongs to the complex I 23 kDa subunit family. In terms of assembly, complex I is composed of at least 49 different subunits. This is a component of the iron-sulfur (IP) fragment of the enzyme. The cofactor is [4Fe-4S] cluster.

The protein resides in the mitochondrion. It catalyses the reaction a ubiquinone + NADH + 5 H(+)(in) = a ubiquinol + NAD(+) + 4 H(+)(out). Functionally, core subunit of the mitochondrial membrane respiratory chain NADH dehydrogenase (Complex I) that is believed to belong to the minimal assembly required for catalysis. Complex I functions in the transfer of electrons from NADH to the respiratory chain. The immediate electron acceptor for the enzyme is believed to be ubiquinone. May donate electrons to ubiquinone. This is NADH dehydrogenase [ubiquinone] iron-sulfur protein 8-A, mitochondrial from Arabidopsis thaliana (Mouse-ear cress).